The following is a 321-amino-acid chain: Digestive cysteine proteinase 3 (321 aa).

A signal peptide spans 1–16 (MKVAALFLCGLALATA). A propeptide spans 17-106 (SPSWDHFKTQ…AVFTAEAGPM (90 aa)) (activation peptide). 3 cysteine pairs are disulfide-bonded: Cys127-Cys170, Cys161-Cys203, and Cys261-Cys310. The active site involves Cys130. Residues His268 and Asn288 contribute to the active site.

This sequence belongs to the peptidase C1 family.

Inhibited by E-64, antipain, leupeptin, heavy metal ions, iodoacetic acid, dithionitrobenzene, p-hydroxymercuri-benzoate; activated by mercaptoethanol and dithiothreitol. This is Digestive cysteine proteinase 3 (LCP3) from Homarus americanus (American lobster).